A 565-amino-acid polypeptide reads, in one-letter code: Protein unc-87 (565 aa).

A compositionally biased stretch (low complexity) spans 1 to 27; that stretch reads MLSFNNTTSASSFQSASSRYLMSSSSS. 2 disordered regions span residues 1–83 and 237–262; these read MLSF…TTNS and IPSQ…RNTN. Basic and acidic residues predominate over residues 54–69; the sequence is EALERLRPNTASRERN. Calponin-like repeat units follow at residues 237–262, 285–310, and 338–363; these read IPSQ…RNTN, VRLQ…RDVC, and VRLQ…RRET. A compositionally biased stretch (polar residues) spans 250-262; sequence KLMTNFGTPRNTN. The segment covering 369-381 has biased composition (basic and acidic residues); sequence SKHPEYDHEKPDQ. The tract at residues 369–400 is disordered; sequence SKHPEYDHEKPDQSEIPLQSGTNKFASQKGMT. The segment covering 384-398 has biased composition (polar residues); it reads IPLQSGTNKFASQKG. Calponin-like repeat units follow at residues 384 to 409, 431 to 456, 472 to 497, and 517 to 542; these read IPLQ…RRET, IPSQ…RWEV, VRLQ…RNTT, and IPSQ…RDVK.

Belongs to the calponin family. Monomer. Interacts with F-actin. Interacts with myosin. In terms of tissue distribution, expressed in the body wall muscles. Isoform a: Expression in the pharynx, anal depressor muscle, uterine muscle, vulva and unidentified neurons in the head and the ventral region. Isoform b: Expression in the body wall muscles, spermatheca, vulva and in the myoepithelial sheath.

Its subcellular location is the cytoplasm. The protein localises to the myofibril. The protein resides in the sarcomere. It is found in the i band. Functionally, thin filament-associated protein that is implicated in actin bundling and actin filament dynamics. Exhibits F-actin cross-linking activity. Required for the maintenance of sarcomeric actin organization in striated muscles. Competes with unc-60 isoform b for actin binding and protects actin filaments from depolymerization by unc-60, thereby contributing to actin filament stability. Cooperates with myosin to form actomyosin bundles and inhibits actomyosin ATPase activity and actomyosin motility. Might protect the myofilaments from mechanical stress. Acts as a negative regulator of myosin-dependent contractility of smooth muscle-like cells in the somatic gonad. This is Protein unc-87 (unc-87) from Caenorhabditis elegans.